The following is an 805-amino-acid chain: Muscarinic acetylcholine receptor DM1 (805 aa).

At 1-100 (MEPVMSLALA…GFETKGPRYS (100 aa)) the chain is on the extracellular side. The span at 27–43 (TSTTTTTTTTTSTTTTT) shows a compositional bias: low complexity. The tract at residues 27-47 (TSTTTTTTTTTSTTTTTASPA) is disordered. Residues Asn65, Asn84, and Asn87 are each glycosylated (N-linked (GlcNAc...) asparagine). Residues 101-121 (LASMVVMGFVAAILSTVTVAG) traverse the membrane as a helical segment. The Cytoplasmic segment spans residues 122 to 141 (NVMVMISFKIDKQLQTISNY). A helical transmembrane segment spans residues 142-162 (FLFSLAIADFAIGAISMPLFA). The Extracellular segment spans residues 163 to 177 (VTTILGYWPLGPIVC). The helical transmembrane segment at 178–198 (DTWLALDYLASNASVLNLLII) threads the bilayer. At 199–220 (SFDRYFSVTRPLTYRAKRTTNR) the chain is on the cytoplasmic side. The helical transmembrane segment at 221-241 (AAVMIGAAWGISLLLWPPWIY) threads the bilayer. The Extracellular segment spans residues 242-266 (SWPYIEGKRTVPKDECYIQFIETNQ). The chain crosses the membrane as a helical span at residues 267-287 (YITFGTALAAFYFPVTIMCFL). Residues 288-718 (YWRIWRETKK…KRQESKAAKT (431 aa)) lie on the Cytoplasmic side of the membrane. 3 disordered regions span residues 302–322 (LPNLQAGKKDSSKRSNSSDEN), 340–359 (GNDHDTWRRPRSESSPDAES), and 507–530 (GNGNGAINNNNNASHNGNGAVNGN). 2 stretches are compositionally biased toward basic and acidic residues: residues 308–318 (GKKDSSKRSNS) and 341–353 (NDHDTWRRPRSES). The segment covering 507–525 (GNGNGAINNNNNASHNGNG) has biased composition (low complexity). Residues 719-739 (LSAILLSFIITWTPYNILVLI) form a helical membrane-spanning segment. At 740–752 (KPLTTCSDCIPTE) the chain is on the extracellular side. Residues 753-773 (LWDFFYALCYINSTINPMCYA) form a helical membrane-spanning segment. Residues 774-805 (LCNATFRRTYVRILTCKWHTRNREGMVRGVYN) are Cytoplasmic-facing.

It belongs to the G-protein coupled receptor 1 family. Muscarinic acetylcholine receptor subfamily. Intense staining in the glomeruli of the antennal lobes, the region of the nervous system containing terminals of antennal olfactory sensory neurons and mechanosensory neurons. Also a discrete group of neurosecretory cells in the pars intercerebralis of the brain.

Its subcellular location is the cell membrane. It is found in the postsynaptic cell membrane. Its function is as follows. The muscarinic acetylcholine receptor mediates various cellular responses, including inhibition of adenylate cyclase, breakdown of phosphoinositides and modulation of potassium channels through the action of G proteins. Primary transducing effect is Pi turnover. May have a role in the processing of olfactory and mechanosensory signals; regulation of neurosecretion. This chain is Muscarinic acetylcholine receptor DM1 (mAChR-A), found in Drosophila melanogaster (Fruit fly).